Reading from the N-terminus, the 285-residue chain is Bifunctional protein FolD (285 aa).

NADP(+) contacts are provided by residues 165 to 167 and Ser190; that span reads GRS.

This sequence belongs to the tetrahydrofolate dehydrogenase/cyclohydrolase family. Homodimer.

It carries out the reaction (6R)-5,10-methylene-5,6,7,8-tetrahydrofolate + NADP(+) = (6R)-5,10-methenyltetrahydrofolate + NADPH. The catalysed reaction is (6R)-5,10-methenyltetrahydrofolate + H2O = (6R)-10-formyltetrahydrofolate + H(+). The protein operates within one-carbon metabolism; tetrahydrofolate interconversion. In terms of biological role, catalyzes the oxidation of 5,10-methylenetetrahydrofolate to 5,10-methenyltetrahydrofolate and then the hydrolysis of 5,10-methenyltetrahydrofolate to 10-formyltetrahydrofolate. This Burkholderia pseudomallei (strain 1106a) protein is Bifunctional protein FolD.